A 155-amino-acid chain; its full sequence is Cathelicidin-1 (155 aa).

The N-terminal stretch at 1 to 29 (METQRASLSLGRCSLWLLLLGLALPSASA) is a signal peptide. Gln30 is modified (pyrrolidone carboxylic acid). A propeptide spanning residues 30–143 (QVLSYREAVL…KQPWAPPQAA (114 aa)) is cleaved from the precursor. Intrachain disulfides connect Cys85–Cys96, Cys107–Cys124, and Cys146–Cys154.

Belongs to the cathelicidin family.

It localises to the secreted. Functionally, potent microbicidal activity; active against S.aureus and E.coli. This chain is Cathelicidin-1 (CATHL1A), found in Ovis aries (Sheep).